The chain runs to 283 residues: Nudix hydrolase 6 (283 aa).

Residues 101 to 233 (SHRIGVGAFV…KKELFRFMAN (133 aa)) form the Nudix hydrolase domain. The short motif at 139–160 (GVVKEGENIWEGALREVEEETG) is the Nudix box element. A divalent metal cation-binding residues include glutamate 154, glutamate 158, and glutamate 204.

This sequence belongs to the Nudix hydrolase family. The cofactor is Mg(2+). It depends on Mn(2+) as a cofactor. In terms of tissue distribution, expressed in stems and leaves. Weakly or not expressed in roots.

It catalyses the reaction ADP-D-ribose + H2O = D-ribose 5-phosphate + AMP + 2 H(+). The enzyme catalyses NAD(+) + H2O = beta-nicotinamide D-ribonucleotide + AMP + 2 H(+). It carries out the reaction NADH + H2O = reduced beta-nicotinamide D-ribonucleotide + AMP + 2 H(+). Probably mediates the hydrolysis of some nucleoside diphosphate derivatives. In vitro, it can use both NADH and ADP-ribose as substrates; however the relevance of such substrates in vivo is unclear. The polypeptide is Nudix hydrolase 6 (Arabidopsis thaliana (Mouse-ear cress)).